We begin with the raw amino-acid sequence, 323 residues long: Acetyl-coenzyme A carboxylase carboxyl transferase subunit alpha (323 aa).

The CoA carboxyltransferase C-terminal domain maps to 39–293; the sequence is RLAGKSQQLT…KRSLAESLRQ (255 aa).

It belongs to the AccA family. In terms of assembly, acetyl-CoA carboxylase is a heterohexamer composed of biotin carboxyl carrier protein (AccB), biotin carboxylase (AccC) and two subunits each of ACCase subunit alpha (AccA) and ACCase subunit beta (AccD).

The protein localises to the cytoplasm. It catalyses the reaction N(6)-carboxybiotinyl-L-lysyl-[protein] + acetyl-CoA = N(6)-biotinyl-L-lysyl-[protein] + malonyl-CoA. It participates in lipid metabolism; malonyl-CoA biosynthesis; malonyl-CoA from acetyl-CoA: step 1/1. Functionally, component of the acetyl coenzyme A carboxylase (ACC) complex. First, biotin carboxylase catalyzes the carboxylation of biotin on its carrier protein (BCCP) and then the CO(2) group is transferred by the carboxyltransferase to acetyl-CoA to form malonyl-CoA. The protein is Acetyl-coenzyme A carboxylase carboxyl transferase subunit alpha of Cupriavidus metallidurans (strain ATCC 43123 / DSM 2839 / NBRC 102507 / CH34) (Ralstonia metallidurans).